The chain runs to 202 residues: Small ribosomal subunit protein uS4c (202 aa).

In terms of domain architecture, S4 RNA-binding spans 89 to 152 (MRLDNIIFRL…QSNTFINNCI (64 aa)).

The protein belongs to the universal ribosomal protein uS4 family. In terms of assembly, part of the 30S ribosomal subunit. Contacts protein S5. The interaction surface between S4 and S5 is involved in control of translational fidelity.

It localises to the plastid. In terms of biological role, one of the primary rRNA binding proteins, it binds directly to 16S rRNA where it nucleates assembly of the body of the 30S subunit. Functionally, with S5 and S12 plays an important role in translational accuracy. This chain is Small ribosomal subunit protein uS4c (rps4), found in Epifagus virginiana (Beechdrops).